Here is a 240-residue protein sequence, read N- to C-terminus: Ubiquinone biosynthesis O-methyltransferase (240 aa).

Positions 44, 64, 85, and 129 each coordinate S-adenosyl-L-methionine.

It belongs to the methyltransferase superfamily. UbiG/COQ3 family.

The catalysed reaction is a 3-demethylubiquinol + S-adenosyl-L-methionine = a ubiquinol + S-adenosyl-L-homocysteine + H(+). The enzyme catalyses a 3-(all-trans-polyprenyl)benzene-1,2-diol + S-adenosyl-L-methionine = a 2-methoxy-6-(all-trans-polyprenyl)phenol + S-adenosyl-L-homocysteine + H(+). Its pathway is cofactor biosynthesis; ubiquinone biosynthesis. Functionally, O-methyltransferase that catalyzes the 2 O-methylation steps in the ubiquinone biosynthetic pathway. This chain is Ubiquinone biosynthesis O-methyltransferase, found in Escherichia coli O127:H6 (strain E2348/69 / EPEC).